A 371-amino-acid chain; its full sequence is Cytochrome b (371 aa).

The next 4 helical transmembrane spans lie at 25–45, 69–90, 105–125, and 170–190; these read FGSMLLACSSMQVLTGFFLAV, WMMQNLHAIGASMFFICIYIHI, WLSGTTLLIMLMATAFFGYVL, and FFALHFILPFGIISLSSLHIM. Residues His-75 and His-89 each contribute to the heme b site. Positions 174 and 188 each coordinate heme b. A ubiquinone is bound at residue His-193. A run of 4 helical transmembrane segments spans residues 218 to 238, 280 to 300, 312 to 332, and 339 to 358; these read YKDLLMLSLMVLMLLMTVSFL, LGGALALAMSIMILLTIPFTH, IMQLMFWTLVATFMVITWAAT, and FTMISQIASTINFLFLIMNP.

It belongs to the cytochrome b family. The cytochrome bc1 complex contains 3 respiratory subunits (MT-CYB, CYC1 and UQCRFS1), 2 core proteins (UQCRC1 and UQCRC2) and probably 6 low-molecular weight proteins. It depends on heme b as a cofactor.

The protein localises to the mitochondrion inner membrane. Its function is as follows. Component of the ubiquinol-cytochrome c reductase complex (complex III or cytochrome b-c1 complex) that is part of the mitochondrial respiratory chain. The b-c1 complex mediates electron transfer from ubiquinol to cytochrome c. Contributes to the generation of a proton gradient across the mitochondrial membrane that is then used for ATP synthesis. The polypeptide is Cytochrome b (MT-CYB) (Eryx miliaris (Desert sand boa)).